A 297-amino-acid chain; its full sequence is Small ribosomal subunit protein uS9m (297 aa).

The tract at residues 278–297 (VERKKPGKRKARKMPTWVKR) is disordered.

This sequence belongs to the universal ribosomal protein uS9 family.

It localises to the mitochondrion. This Kluyveromyces lactis (strain ATCC 8585 / CBS 2359 / DSM 70799 / NBRC 1267 / NRRL Y-1140 / WM37) (Yeast) protein is Small ribosomal subunit protein uS9m (MRPS9).